A 308-amino-acid polypeptide reads, in one-letter code: N-acetylmuramic acid 6-phosphate etherase (308 aa).

One can recognise an SIS domain in the interval 63–226 (IVDAFACGGR…STASMIRSGK (164 aa)). Catalysis depends on Glu91, which acts as the Proton donor. The active site involves Glu122.

Belongs to the GCKR-like family. MurNAc-6-P etherase subfamily. Homodimer.

The catalysed reaction is N-acetyl-D-muramate 6-phosphate + H2O = N-acetyl-D-glucosamine 6-phosphate + (R)-lactate. It participates in amino-sugar metabolism; 1,6-anhydro-N-acetylmuramate degradation. The protein operates within amino-sugar metabolism; N-acetylmuramate degradation. Its pathway is cell wall biogenesis; peptidoglycan recycling. In terms of biological role, specifically catalyzes the cleavage of the D-lactyl ether substituent of MurNAc 6-phosphate, producing GlcNAc 6-phosphate and D-lactate. Together with AnmK, is also required for the utilization of anhydro-N-acetylmuramic acid (anhMurNAc) either imported from the medium or derived from its own cell wall murein, and thus plays a role in cell wall recycling. In Colwellia psychrerythraea (strain 34H / ATCC BAA-681) (Vibrio psychroerythus), this protein is N-acetylmuramic acid 6-phosphate etherase.